Consider the following 448-residue polypeptide: Adenylosuccinate synthetase 1 (448 aa).

GTP contacts are provided by residues 22–28 and 50–52; these read GDEGKGK and GHT. The active-site Proton acceptor is aspartate 23. Aspartate 23 and glycine 50 together coordinate Mg(2+). IMP is bound by residues 23–26, 48–51, threonine 139, arginine 153, glutamine 234, threonine 249, and arginine 321; these read DEGK and NAGH. Histidine 51 serves as the catalytic Proton donor. Position 317-323 (317-323) interacts with substrate; that stretch reads SVTGRPR. Residues arginine 323, 349–351, and 431–433 each bind GTP; these read KLD and STG.

It belongs to the adenylosuccinate synthetase family. In terms of assembly, homodimer. It depends on Mg(2+) as a cofactor.

It is found in the cytoplasm. The enzyme catalyses IMP + L-aspartate + GTP = N(6)-(1,2-dicarboxyethyl)-AMP + GDP + phosphate + 2 H(+). Its pathway is purine metabolism; AMP biosynthesis via de novo pathway; AMP from IMP: step 1/2. Functionally, plays an important role in the de novo pathway of purine nucleotide biosynthesis. Catalyzes the first committed step in the biosynthesis of AMP from IMP. The sequence is that of Adenylosuccinate synthetase 1 from Burkholderia lata (strain ATCC 17760 / DSM 23089 / LMG 22485 / NCIMB 9086 / R18194 / 383).